The sequence spans 703 residues: Polyribonucleotide nucleotidyltransferase (703 aa).

Mg(2+)-binding residues include Asp-488 and Asp-494. The region spanning 555-614 is the KH domain; it reads PKIVKMQINPDKIKDVIGPGGKIITKIIDETGVKIDIEQTGEVFISGIEIDMIKKAQELI. Residues 624–692 enclose the S1 motif domain; sequence GKTYKGKVSR…EKGRVNLSRK (69 aa).

This sequence belongs to the polyribonucleotide nucleotidyltransferase family. It depends on Mg(2+) as a cofactor.

Its subcellular location is the cytoplasm. It catalyses the reaction RNA(n+1) + phosphate = RNA(n) + a ribonucleoside 5'-diphosphate. In terms of biological role, involved in mRNA degradation. Catalyzes the phosphorolysis of single-stranded polyribonucleotides processively in the 3'- to 5'-direction. In Clostridioides difficile (strain 630) (Peptoclostridium difficile), this protein is Polyribonucleotide nucleotidyltransferase.